The primary structure comprises 607 residues: Glycerophosphodiester phosphodiesterase domain-containing protein 5 (607 aa).

Topologically, residues 1–42 (MVRHQPLQYYEPQLCLSCLTGIYGCRWKRYQRSHDDTTPWER) are cytoplasmic. 2 disulfide bridges follow: C15–C18 and C25–C571. A helical transmembrane segment spans residues 43-63 (LWFLLLVCTFSLTLTWLYFWW). The Extracellular portion of the chain corresponds to 64-89 (GVHNDYDEFNWYLYNRMGYWSDWSVP). A helical transmembrane segment spans residues 90–110 (ILVTSAAAFTYIAGLLVLALC). Over 111 to 125 (HIAVGQQLNLHWIHK) the chain is Cytoplasmic. The chain crosses the membrane as a helical span at residues 126–146 (MGLVVILASTVVAMSAVAQLW). The Extracellular segment spans residues 147–160 (EDEWEVLLISLQGT). The chain crosses the membrane as a helical span at residues 161–181 (APFLHIGALVAITALSWIVAG). Residues 182–192 (QFARAERSSSQ) are Cytoplasmic-facing. Residues 193-213 (LTILCTFFAVVFTFYLIPLTI) form a helical membrane-spanning segment. Residues 214-496 (SSPCIMEKKD…PLWIMPPDEY (283 aa)) are Extracellular-facing. In terms of domain architecture, GP-PDE spans 228–485 (PALIGHRGAP…DNSHTLSRVP (258 aa)). N-linked (GlcNAc...) asparagine glycosylation is found at N301, N336, N352, N374, and N448. A helical membrane pass occupies residues 497–517 (CLMWVTADLISFSLIIGIFVL). The Cytoplasmic portion of the chain corresponds to 518-607 (QKWRLGGIRS…AKTVTEQSGH (90 aa)). Residues 582–607 (ANSTATPVGPRNAGSRAKTVTEQSGH) form a disordered region.

It belongs to the glycerophosphoryl diester phosphodiesterase family. As to quaternary structure, interacts with PRDX1; forms a mixed-disulfide with PRDX1, leading to disrupt intramolecular disulfide bond between Cys-25 and Cys-571. Intramolecular disulfide bond between Cys-25 and Cys-571 is reduced by PRDX1. As to expression, detected in brain, lung, heart, kidney and testis.

The protein resides in the endomembrane system. It is found in the cytoplasm. It localises to the perinuclear region. The protein localises to the cell projection. Its subcellular location is the growth cone. The enzyme catalyses a 1,2-diacyl-sn-glycero-3-phospho-(1D-myo-inositol-4,5-bisphosphate) + H2O = 1D-myo-inositol 1,4,5-trisphosphate + a 1,2-diacyl-sn-glycerol + H(+). It carries out the reaction sn-glycerol 3-phosphocholine + H2O = sn-glycerol 3-phosphate + choline + H(+). Inhibited by high level of NaCl or urea. Its function is as follows. Glycerophosphodiester phosphodiesterase that promotes neurite formation and drives spinal motor neuron differentiation. Mediates the cleavage of glycosylphosphatidylinositol (GPI) anchor of target proteins: removes the GPI-anchor of RECK, leading to release RECK from the plasma membrane. May contribute to the osmotic regulation of cellular glycerophosphocholine. This is Glycerophosphodiester phosphodiesterase domain-containing protein 5 from Mus musculus (Mouse).